The following is a 322-amino-acid chain: uncharacterized protein (322 aa).

Polar residues predominate over residues 1-13 (MTNADEQNMGQQE). Disordered stretches follow at residues 1 to 94 (MTNA…EEYE) and 125 to 322 (RREM…TDEE). The segment covering 14 to 31 (GTDTATTAQDTNTQTVGT) has biased composition (low complexity). The segment covering 32–50 (QSENTQNTQQASDAQTEQT) has biased composition (polar residues). Positions 64–75 (EVDEDDVLDAQE) are enriched in acidic residues. Composition is skewed to basic and acidic residues over residues 141–227 (GGDR…RGGD), 235–269 (RPREDRGGFGDRDRGGFRPREDRGERNFGGDRGGD), 277–295 (RPREDRNFGDREFRPRTDD), and 308–322 (ARADRGWANRRTDEE).

This is an uncharacterized protein from Deinococcus radiodurans (strain ATCC 13939 / DSM 20539 / JCM 16871 / CCUG 27074 / LMG 4051 / NBRC 15346 / NCIMB 9279 / VKM B-1422 / R1).